Here is a 387-residue protein sequence, read N- to C-terminus: MTITTSEATSHTLGGPIRVMVVDDSAVVRGLETRMLEEDPAIQVVASVGNGQMAVQALDRHDIEVVILDIEMPVMDGLTALPELLRKSPNLKVIMASTLTLRNAEVTLKALQMGASECLAKPTTSREISGGTDFRHDLVEKVKALGGARRRALGRAAPTARAGGAVVERKVGALPSLMAQRAQQPISLRPAAEERPDIIAIGSSTGGPQALFTVFGDMRKGGWPSQPIVVTQHMPATFTTILAGHIERVAGVPTAEAKDGDPIRGGHIYIAPGDYHMVVETRGTEKILRLNQDPPESFCRPAVDPLFRSVAKAYGRRVLAVVLTGMGADGSKGGKIIAESGGTVIAQDEPSSVVWGMPGATAQIGACSAVLPLKDIAAYVLRSANKR.

The 119-residue stretch at 18–136 (RVMVVDDSAV…EISGGTDFRH (119 aa)) folds into the Response regulatory domain. Asp-69 carries the post-translational modification 4-aspartylphosphate. The region spanning 190–387 (PAAEERPDII…AYVLRSANKR (198 aa)) is the CheB-type methylesterase domain. Catalysis depends on residues Ser-204, His-233, and Asp-329.

It belongs to the CheB family. Post-translationally, phosphorylated by CheA. Phosphorylation of the N-terminal regulatory domain activates the methylesterase activity.

The protein resides in the cytoplasm. The enzyme catalyses [protein]-L-glutamate 5-O-methyl ester + H2O = L-glutamyl-[protein] + methanol + H(+). It catalyses the reaction L-glutaminyl-[protein] + H2O = L-glutamyl-[protein] + NH4(+). In terms of biological role, involved in chemotaxis. Part of a chemotaxis signal transduction system that modulates chemotaxis in response to various stimuli. Catalyzes the demethylation of specific methylglutamate residues introduced into the chemoreceptors (methyl-accepting chemotaxis proteins or MCP) by CheR. Also mediates the irreversible deamidation of specific glutamine residues to glutamic acid. The polypeptide is Protein-glutamate methylesterase/protein-glutamine glutaminase 1 (Rhodospirillum rubrum (strain ATCC 11170 / ATH 1.1.1 / DSM 467 / LMG 4362 / NCIMB 8255 / S1)).